Consider the following 608-residue polypeptide: Glutamine--fructose-6-phosphate aminotransferase [isomerizing] (608 aa).

The Nucleophile; for GATase activity role is filled by cysteine 2. In terms of domain architecture, Glutamine amidotransferase type-2 spans cysteine 2–threonine 217. 2 consecutive SIS domains span residues isoleucine 281–threonine 422 and leucine 456–proline 598. The active-site For Fru-6P isomerization activity is the lysine 603.

Its subcellular location is the cytoplasm. It carries out the reaction D-fructose 6-phosphate + L-glutamine = D-glucosamine 6-phosphate + L-glutamate. In terms of biological role, involved in the production of the root hair deformation (HAD) factor specifically on medicago. The sequence is that of Glutamine--fructose-6-phosphate aminotransferase [isomerizing] (nodM) from Rhizobium meliloti (strain 1021) (Ensifer meliloti).